The chain runs to 296 residues: 4-hydroxy-tetrahydrodipicolinate synthase (296 aa).

Threonine 49 lines the pyruvate pocket. The active-site Proton donor/acceptor is tyrosine 137. The Schiff-base intermediate with substrate role is filled by lysine 166. Position 208 (isoleucine 208) interacts with pyruvate.

This sequence belongs to the DapA family. In terms of assembly, homotetramer; dimer of dimers.

It localises to the cytoplasm. It catalyses the reaction L-aspartate 4-semialdehyde + pyruvate = (2S,4S)-4-hydroxy-2,3,4,5-tetrahydrodipicolinate + H2O + H(+). It functions in the pathway amino-acid biosynthesis; L-lysine biosynthesis via DAP pathway; (S)-tetrahydrodipicolinate from L-aspartate: step 3/4. Its function is as follows. Catalyzes the condensation of (S)-aspartate-beta-semialdehyde [(S)-ASA] and pyruvate to 4-hydroxy-tetrahydrodipicolinate (HTPA). In Chlorobium phaeovibrioides (strain DSM 265 / 1930) (Prosthecochloris vibrioformis (strain DSM 265)), this protein is 4-hydroxy-tetrahydrodipicolinate synthase.